A 382-amino-acid polypeptide reads, in one-letter code: Prostaglandin D2 receptor 2 (382 aa).

The Extracellular portion of the chain corresponds to 1–32 (MANVTLKPLCPLLEEMVQLPNHSNSSLRYIDH). N-linked (GlcNAc...) asparagine glycosylation is found at N3, N21, and N24. Residues 33-55 (VSVLLHGLASLLGLVENGLILFV) traverse the membrane as a helical segment. Residues 56-66 (VGCRMRQTVVT) are Cytoplasmic-facing. A helical transmembrane segment spans residues 67–88 (TWVLHLALSDLLAAASLPFFTY). Residues 89–105 (FLAVGHSWELGTTFCKL) are Extracellular-facing. An intrachain disulfide couples C103 to C181. The chain crosses the membrane as a helical span at residues 106–126 (HSSVFFLNMFASGFLLSAISL). Over 127-145 (DRCLQVVRPVWAQNHRTVA) the chain is Cytoplasmic. A helical membrane pass occupies residues 146–167 (VAHRVCLMLWALAVLNTIPYFV). Residues 168-209 (FRDTIPRLDGRIMCYYNLLLWNPGPDRDTTCDYRQKALAVSK) are Extracellular-facing. A helical membrane pass occupies residues 210–230 (FLLAFMVPLAIIASSHVAVSL). The Cytoplasmic portion of the chain corresponds to 231-246 (RLHHRGRQRTGRFVRL). Residues 247-268 (VAAIVVAFVLCWGPYHIFSLLE) form a helical membrane-spanning segment. Over 269-287 (ARAHSVTTLRQLASRGLPF) the chain is Extracellular. A helical membrane pass occupies residues 288 to 307 (VTSLAFFNSVVNPLLYVFTC). At 308-357 (PDMLYKLRRSLRAVLESVLVEDSDQSGGLRNRRRRASSTATPASTLLLAD) the chain is on the cytoplasmic side. The Involved in the recycling of CRTH2 signature appears at 329-332 (DSDQ). Residues S330 and S344 each carry the phosphoserine modification.

The protein belongs to the G-protein coupled receptor 1 family. In terms of processing, phosphorylated.

The protein resides in the cell membrane. Functionally, receptor for prostaglandin D2 (PGD2). Coupled to the G(i)-protein. Receptor activation may result in pertussis toxin-sensitive decreases in cAMP levels and Ca(2+) mobilization. PI3K signaling is also implicated in mediating PTGDR2 effects. PGD2 induced receptor internalization. CRTH2 internalization can be regulated by diverse kinases such as, PKC, PKA, GRK2, GPRK5/GRK5 and GRK6. Receptor activation is responsible, at least in part, in immune regulation and allergic/inflammation responses. This is Prostaglandin D2 receptor 2 (Ptgdr2) from Mus musculus (Mouse).